The chain runs to 255 residues: DNA repair protein RecO (255 aa).

Belongs to the RecO family.

Involved in DNA repair and RecF pathway recombination. This is DNA repair protein RecO from Bacillus velezensis (strain DSM 23117 / BGSC 10A6 / LMG 26770 / FZB42) (Bacillus amyloliquefaciens subsp. plantarum).